We begin with the raw amino-acid sequence, 410 residues long: Aspartic proteinase Asp1 (410 aa).

Residues 1-23 (MTARLALLASLLLLLQLVPPSSA) form the signal peptide. Residues 24–46 (VVLELHGNVYPIGHFFVTMNIGD) constitute a propeptide, removed in mature form. The 355-residue stretch at 38 to 392 (FFVTMNIGDP…DSERSLLGWV (355 aa)) folds into the Peptidase A1 domain. Active-site residues include D56 and D257.

It belongs to the peptidase A1 family. As to expression, expressed in pollen, nucellus, ovary wall, shoot and root meristem, coleoptiles of immature seeds, and somatic embryos.

Functionally, possesses protease activity in vitro. This is Aspartic proteinase Asp1 (ASP1) from Oryza sativa subsp. indica (Rice).